The primary structure comprises 1379 residues: DNA-directed RNA polymerase subunit beta (1379 aa).

It belongs to the RNA polymerase beta chain family. In terms of assembly, the RNAP catalytic core consists of 2 alpha, 1 beta, 1 beta' and 1 omega subunit. When a sigma factor is associated with the core the holoenzyme is formed, which can initiate transcription.

It catalyses the reaction RNA(n) + a ribonucleoside 5'-triphosphate = RNA(n+1) + diphosphate. In terms of biological role, DNA-dependent RNA polymerase catalyzes the transcription of DNA into RNA using the four ribonucleoside triphosphates as substrates. This chain is DNA-directed RNA polymerase subunit beta, found in Allorhizobium ampelinum (strain ATCC BAA-846 / DSM 112012 / S4) (Agrobacterium vitis (strain S4)).